Reading from the N-terminus, the 820-residue chain is Quinate repressor protein (820 aa).

A disordered region spans residues 25 to 79 (SFEQMLLQQDSNESSRRTSPSRTHSRVDLERHSSHIVSLSSSNGSPSLEDPENRL). Positions 59–71 (HIVSLSSSNGSPS) are enriched in low complexity.

It in the N-terminal section; belongs to the shikimate kinase family. The protein in the 2nd section; belongs to the type-I 3-dehydroquinase family. In the C-terminal section; belongs to the shikimate dehydrogenase family. In terms of assembly, interacts with qutA; transcriptional activator of the quinate utilization pathway genes.

In terms of biological role, multi-domain repressor protein that negatively regulates transcription of the quinate utilization pathway genes. May mediate its repressor activity by binding directly to the qutA activator protein. The polypeptide is Quinate repressor protein (qutR) (Talaromyces stipitatus (strain ATCC 10500 / CBS 375.48 / QM 6759 / NRRL 1006) (Penicillium stipitatum)).